Here is a 276-residue protein sequence, read N- to C-terminus: MEVKPLKKLRLYGFNNLTKTLSFNMYDICYAKTPEHRDAYIQYIDEEYNAQRLTSIVTEVARIVGANILNIAKQDYDPQGASVTMLIAEEHLGPENPDNDPFSPVYTDKEGPLPDAVVAHLDKSHITVHTYPESHPHGGISTFRADIDVSTCGQISPLKALNFLIESFAPDIIVADYRVRGFTRDVDGKKVFIDHKINSIQNYVDRKYRDLYQMIDVTVFQEYIFHTKMILKDFDLDNYLFGTAKKELSINDKRKIKQRLKKEMAEIFYGKNMPRI.

The active-site Schiff-base intermediate with substrate; via pyruvic acid is Ser-124. At Ser-124 the chain carries Pyruvic acid (Ser); by autocatalysis. Catalysis depends on His-129, which acts as the Proton acceptor; for processing activity. Catalysis depends on Cys-152, which acts as the Proton donor; for catalytic activity.

The protein belongs to the prokaryotic AdoMetDC family. Type 2 subfamily. As to quaternary structure, heterooctamer of four alpha and four beta chains arranged as a tetramer of alpha/beta heterodimers. It depends on pyruvate as a cofactor. In terms of processing, is synthesized initially as an inactive proenzyme. Formation of the active enzyme involves a self-maturation process in which the active site pyruvoyl group is generated from an internal serine residue via an autocatalytic post-translational modification. Two non-identical subunits are generated from the proenzyme in this reaction, and the pyruvate is formed at the N-terminus of the alpha chain, which is derived from the carboxyl end of the proenzyme. The post-translation cleavage follows an unusual pathway, termed non-hydrolytic serinolysis, in which the side chain hydroxyl group of the serine supplies its oxygen atom to form the C-terminus of the beta chain, while the remainder of the serine residue undergoes an oxidative deamination to produce ammonia and the pyruvoyl group blocking the N-terminus of the alpha chain.

The enzyme catalyses S-adenosyl-L-methionine + H(+) = S-adenosyl 3-(methylsulfanyl)propylamine + CO2. Its pathway is amine and polyamine biosynthesis; S-adenosylmethioninamine biosynthesis; S-adenosylmethioninamine from S-adenosyl-L-methionine: step 1/1. In terms of biological role, catalyzes the decarboxylation of S-adenosylmethionine to S-adenosylmethioninamine (dcAdoMet), the propylamine donor required for the synthesis of the polyamines spermine and spermidine from the diamine putrescine. The sequence is that of S-adenosylmethionine decarboxylase proenzyme from Desulfitobacterium hafniense (strain DSM 10664 / DCB-2).